A 1103-amino-acid polypeptide reads, in one-letter code: Kinesin-like protein KIF1C (1103 aa).

One can recognise a Kinesin motor domain in the interval 5–348 (SVKVAVRVRP…LRYADRTKQI (344 aa)). 97–104 (GQTGAGKS) lines the ATP pocket. Position 295 is a phosphoserine (Ser295). 2 coiled-coil regions span residues 359–388 (NARL…SALE) and 438–479 (EEAM…LAEM). The interval 400–438 (ALPAVSSPPAPVSPSSPTTHNGELEPSFSPNTESQIGPE) is disordered. The residue at position 494 (Ser494) is a Phosphoserine. The FHA domain occupies 523 to 590 (TRVGQVDMDI…LKSGNRIVMG (68 aa)). Positions 633-674 (EQQGIDIKLEMEKRLQDLENQYRKEKEEADLLLEQQRLYADS) form a coiled coil. A phosphoserine mark is found at Ser674 and Ser676. 3 disordered regions span residues 808–828 (GEEE…ARGA), 874–924 (LAQD…WERV), and 950–1103 (QGLQ…GAAV). Positions 813–822 (GGAGSGGGSE) are enriched in gly residues. The stretch at 828–872 (AEVEDLRAHIDKLTGILQEVKLQNSSKDRELQALRDRMLRMERVI) forms a coiled coil. Positions 893 to 910 (PEGSEAAEEAAPSDRMPS) are enriched in low complexity. Ser915 is modified (phosphoserine). Residues 953-962 (QGSGGRGGGL) show a composition bias toward gly residues. Basic residues predominate over residues 1021–1031 (PSPRRSHHPRR). Ser1033 bears the Phosphoserine mark. Arg1041 carries the omega-N-methylarginine modification. Over residues 1062 to 1083 (PQPPQPYPAQRPPGPRYPPYTT) the composition is skewed to pro residues. Thr1083 carries the post-translational modification Phosphothreonine. Position 1092 is a phosphoserine (Ser1092). The span at 1092–1103 (SAPDLKESGAAV) shows a compositional bias: basic and acidic residues.

The protein belongs to the TRAFAC class myosin-kinesin ATPase superfamily. Kinesin family. Unc-104 subfamily. As to quaternary structure, monomer. Interacts with BICD2. Post-translationally, phosphorylated on tyrosine residues. In terms of tissue distribution, expressed in all tissues examined, with most abundant expression in heart and skeletal muscle.

The protein resides in the cytoplasm. It localises to the cytoskeleton. Functionally, motor required for the retrograde transport of Golgi vesicles to the endoplasmic reticulum. Has a microtubule plus end-directed motility. In Homo sapiens (Human), this protein is Kinesin-like protein KIF1C (KIF1C).